The sequence spans 147 residues: UPF0306 protein YpAngola_A4021 (147 aa).

This sequence belongs to the UPF0306 family.

In Yersinia pestis bv. Antiqua (strain Angola), this protein is UPF0306 protein YpAngola_A4021.